The primary structure comprises 1128 residues: Probable serine/threonine-protein kinase DDB_G0283337 (1128 aa).

A compositionally biased stretch (low complexity) spans 1–17 (MENNNNNNINKTNTPNN). Disordered regions lie at residues 1–21 (MENNNNNNINKTNTPNNSFSP), 60–100 (INHN…NNNN), 131–151 (RESNSNNNSNNSNININNNSN), 236–256 (NNSKEDCNSSNNSYDNDSNSN), and 375–504 (NDNE…NSEQ). Low complexity-rich tracts occupy residues 243 to 256 (NSSNNSYDNDSNSN) and 375 to 502 (NDNE…NNNS). A Protein kinase domain is found at 777-1054 (LSDFSIIGEG…EIQKCKEEYE (278 aa)). ATP is bound by residues 783-791 (IGEGGFSTV) and lysine 809. The active-site Proton acceptor is aspartate 904.

Belongs to the protein kinase superfamily. Ser/Thr protein kinase family.

The enzyme catalyses L-seryl-[protein] + ATP = O-phospho-L-seryl-[protein] + ADP + H(+). It catalyses the reaction L-threonyl-[protein] + ATP = O-phospho-L-threonyl-[protein] + ADP + H(+). The sequence is that of Probable serine/threonine-protein kinase DDB_G0283337 from Dictyostelium discoideum (Social amoeba).